We begin with the raw amino-acid sequence, 387 residues long: F-box only protein 4 (387 aa).

Phosphoserine occurs at positions 11, 12, and 48. An F-box domain is found at 56–102 (ASSLTRLPIDVQLYILSFLSPHDLCQLGSTSRYWNETVRDPILWRYF).

As to quaternary structure, homodimer. Part of the SCF (SKP1-CUL1-F-box) E3 ubiquitin-protein ligase complex SCF(FBXO4) formed of CUL1, SKP1, RBX1 and FBXO4. Interacts with TERF1; this interaction is prevented in the presence of GNL3L. Identified in a complex with CRYAB and CCND1. Post-translationally, phosphorylation at Ser-11 varies during the cell cycle. It is low in resting cells and high in the S phase and the G2/M phase of the cell cycle. Phosphorylation is decreased during late G1 phase. Phosphorylation at Ser-11 promotes homodimerization and is necessary for optimal ubiquitin ligase activity towards CCND1.

It localises to the cytoplasm. It participates in protein modification; protein ubiquitination. Its function is as follows. Substrate recognition component of a SCF (SKP1-CUL1-F-box protein) E3 ubiquitin-protein ligase complex that mediates the ubiquitination and subsequent proteasomal degradation of target proteins. Promotes ubiquitination of cyclin-D1 (CCND1) and its subsequent proteasomal degradation. However, it does not act as a major regulator of CCND1 stability during the G1/S transition. Recognizes TERF1 and promotes its ubiquitination together with UBE2D1. Promotes ubiquitination of FXR1 following phosphorylation of FXR1 by GSK3B, leading to FXR1 degradation by the proteasome. The protein is F-box only protein 4 (FBXO4) of Bos taurus (Bovine).